A 435-amino-acid chain; its full sequence is Chaperone SurA (435 aa).

Residues 1–24 (MRLRSFAFLGFMLLVAMAPSMASA) form the signal peptide. PpiC domains follow at residues 173 to 274 (DTAY…KLID) and 286 to 385 (VTEN…ELED).

It localises to the periplasm. The catalysed reaction is [protein]-peptidylproline (omega=180) = [protein]-peptidylproline (omega=0). Chaperone involved in the correct folding and assembly of outer membrane proteins. Recognizes specific patterns of aromatic residues and the orientation of their side chains, which are found more frequently in integral outer membrane proteins. May act in both early periplasmic and late outer membrane-associated steps of protein maturation. The protein is Chaperone SurA of Chromohalobacter salexigens (strain ATCC BAA-138 / DSM 3043 / CIP 106854 / NCIMB 13768 / 1H11).